Reading from the N-terminus, the 208-residue chain is MAKNHYNITLALAGICQSGRLVQQLSHENQCDTDAVTTMVNSILNTNPASVLDVFGNHERNLKIGLNAMLGMFNSSNNGISADLTRYILSLIALERRLMKNQAASDALGNRISLLERQQAYFEPMSEGMFNALAGIYVDVISPLGPRIQVTGSPDILRNPLVQAKVRAILLAGVRCAVLWQQVGGGRLQLMFSRQRLIQQAKDILSHC.

Belongs to the HflD family.

Its subcellular location is the cytoplasm. It localises to the cell inner membrane. The protein is High frequency lysogenization protein HflD homolog of Photorhabdus laumondii subsp. laumondii (strain DSM 15139 / CIP 105565 / TT01) (Photorhabdus luminescens subsp. laumondii).